Reading from the N-terminus, the 479-residue chain is 5-hydroxytryptamine receptor 7 (479 aa).

At 1–83 the chain is on the extracellular side; it reads MMDVNSSGRP…INYGRVEKVV (83 aa). Asparagine 5 and asparagine 66 each carry an N-linked (GlcNAc...) asparagine glycan. A helical transmembrane segment spans residues 84 to 108; the sequence is IGSILTLITLLTIAGNCLVVISVCF. Topologically, residues 109–118 are cytoplasmic; sequence VKKLRQPSNY. The helical transmembrane segment at 119–140 threads the bilayer; that stretch reads LIVSLALADLSVAVAVMPFVSV. Topologically, residues 141–152 are extracellular; it reads TDLIGGKWIFGH. Residues 153–178 form a helical membrane-spanning segment; sequence FFCNVFIAMDVMCCTASIMTLCVISI. Cysteine 155 and cysteine 231 are oxidised to a cystine. Aspartate 162 contributes to the serotonin binding site. The Cytoplasmic portion of the chain corresponds to 179–198; the sequence is DRYLGITRPLTYPVRQNGKC. Residues 199-219 form a helical membrane-spanning segment; the sequence is MAKMILSVWLLSASITLPPLF. Topologically, residues 220–237 are extracellular; that stretch reads GWAQNVNDDKVCLISQDF. Residues 238 to 260 traverse the membrane as a helical segment; it reads GYTIYSTAVAFYIPMSVMLFMYY. Residues 261-326 lie on the Cytoplasmic side of the membrane; the sequence is QIYKAARKSA…SIFKREQKAA (66 aa). The chain crosses the membrane as a helical span at residues 327 to 352; the sequence is TTLGIIVGAFTVCWLPFFLLSTARPF. Residues 353 to 363 are Extracellular-facing; it reads ICGTSCSCIPL. Residues 364–387 traverse the membrane as a helical segment; that stretch reads WVERTFLWLGYANSLINPFIYAFF. Over 388–479 the chain is Cytoplasmic; the sequence is NRDLRTTYRS…TVEKKVMIHD (92 aa). The S-palmitoyl cysteine moiety is linked to residue cysteine 401.

Belongs to the G-protein coupled receptor 1 family. Predominant isoform in spleen, caudate and hippocampus. In terms of tissue distribution, expressed at lower levels. As to expression, minor isoform in terms of expression.

Its subcellular location is the cell membrane. In terms of biological role, G-protein coupled receptor for 5-hydroxytryptamine (serotonin), a biogenic hormone that functions as a neurotransmitter, a hormone and a mitogen. Ligand binding causes a conformation change that triggers signaling via guanine nucleotide-binding proteins (G proteins) and modulates the activity of downstream effectors. HTR7 is coupled to G(s) G alpha proteins and mediates activation of adenylate cyclase activity. In Homo sapiens (Human), this protein is 5-hydroxytryptamine receptor 7.